The primary structure comprises 231 residues: Putative N-acetylmannosamine-6-phosphate 2-epimerase (231 aa).

This sequence belongs to the NanE family.

It carries out the reaction an N-acyl-D-glucosamine 6-phosphate = an N-acyl-D-mannosamine 6-phosphate. The protein operates within amino-sugar metabolism; N-acetylneuraminate degradation; D-fructose 6-phosphate from N-acetylneuraminate: step 3/5. Converts N-acetylmannosamine-6-phosphate (ManNAc-6-P) to N-acetylglucosamine-6-phosphate (GlcNAc-6-P). This Listeria monocytogenes serotype 4b (strain F2365) protein is Putative N-acetylmannosamine-6-phosphate 2-epimerase.